The chain runs to 206 residues: Large ribosomal subunit protein uL4 (206 aa).

Residues 55 to 80 (AFVSGGGAKPWRQKGTGRARSGSNRS) are disordered.

It belongs to the universal ribosomal protein uL4 family. Part of the 50S ribosomal subunit.

Its function is as follows. One of the primary rRNA binding proteins, this protein initially binds near the 5'-end of the 23S rRNA. It is important during the early stages of 50S assembly. It makes multiple contacts with different domains of the 23S rRNA in the assembled 50S subunit and ribosome. Forms part of the polypeptide exit tunnel. This Nitratidesulfovibrio vulgaris (strain DSM 19637 / Miyazaki F) (Desulfovibrio vulgaris) protein is Large ribosomal subunit protein uL4.